The sequence spans 344 residues: Anthranilate phosphoribosyltransferase (344 aa).

5-phospho-alpha-D-ribose 1-diphosphate is bound by residues glycine 81, 84-85 (GD), serine 89, 91-94 (NIST), 109-117 (KHGNRALSS), and alanine 121. An anthranilate-binding site is contributed by glycine 81. Serine 93 contacts Mg(2+). Asparagine 112 is a binding site for anthranilate. Arginine 167 contributes to the anthranilate binding site. Mg(2+) contacts are provided by aspartate 226 and glutamate 227.

It belongs to the anthranilate phosphoribosyltransferase family. In terms of assembly, homodimer. The cofactor is Mg(2+).

It catalyses the reaction N-(5-phospho-beta-D-ribosyl)anthranilate + diphosphate = 5-phospho-alpha-D-ribose 1-diphosphate + anthranilate. It functions in the pathway amino-acid biosynthesis; L-tryptophan biosynthesis; L-tryptophan from chorismate: step 2/5. Functionally, catalyzes the transfer of the phosphoribosyl group of 5-phosphorylribose-1-pyrophosphate (PRPP) to anthranilate to yield N-(5'-phosphoribosyl)-anthranilate (PRA). The chain is Anthranilate phosphoribosyltransferase from Azorhizobium caulinodans (strain ATCC 43989 / DSM 5975 / JCM 20966 / LMG 6465 / NBRC 14845 / NCIMB 13405 / ORS 571).